The following is a 249-amino-acid chain: Uridylate kinase (249 aa).

Residue 16 to 19 coordinates ATP; sequence KLSG. Gly57 lines the UMP pocket. The ATP site is built by Gly58 and Arg62. UMP is bound by residues Asp77 and 138-145; that span reads AGMPYFST. Residues Asn166, Tyr172, and Asp175 each coordinate ATP.

The protein belongs to the UMP kinase family. In terms of assembly, homohexamer.

It is found in the cytoplasm. It catalyses the reaction UMP + ATP = UDP + ADP. Its pathway is pyrimidine metabolism; CTP biosynthesis via de novo pathway; UDP from UMP (UMPK route): step 1/1. With respect to regulation, inhibited by UTP. In terms of biological role, catalyzes the reversible phosphorylation of UMP to UDP. In Bifidobacterium adolescentis (strain ATCC 15703 / DSM 20083 / NCTC 11814 / E194a), this protein is Uridylate kinase.